The sequence spans 75 residues: Veswaprin-b (75 aa).

An N-terminal signal peptide occupies residues 1-24 (MSSGGLLLLLGLLTLWAELTPISG). A disordered region spans residues 23-42 (SGQDRPKKPGLRPPRPQKPP). Residues 27-72 (RPKKPGLRPPRPQKPPCVRECKNDWRCPGEQKCCRYGCIYECRDPI) form the WAP; atypical domain. 3 disulfides stabilise this stretch: cysteine 43/cysteine 64, cysteine 47/cysteine 59, and cysteine 53/cysteine 68.

It belongs to the venom waprin family. As to expression, expressed by the venom gland.

It is found in the secreted. In terms of biological role, damages membranes of susceptible bacteria. Has no hemolytic activity. Not toxic to mice. Does not inhibit the proteinases elastase and cathepsin G. The chain is Veswaprin-b from Demansia vestigiata (Lesser black whip snake).